Reading from the N-terminus, the 509-residue chain is Scavenger receptor class B member 1 (509 aa).

Residues 1-11 (MGNLSRARRVT) are Cytoplasmic-facing. A helical transmembrane segment spans residues 12–32 (AALGFIGLLFAVLGIIMIVMV). Residues 33–440 (PSIIKQQVLK…YIQLVLMPKV (408 aa)) lie on the Extracellular side of the membrane. Residues Asn102, Asn108, Asn173, Asn212, Asn227, Asn255, Asn310, Asn330, and Asn383 are each glycosylated (N-linked (GlcNAc...) asparagine). Cysteines 251 and 384 form a disulfide. Residues 441–461 (LHYAQYVLLALGCVLLLIPII) form a helical membrane-spanning segment. Topologically, residues 462–509 (YQIRSQEKCYLFWISFKKGSKDKEAVQAYSEFLMTSAPKGTVLQEARL) are cytoplasmic.

It belongs to the CD36 family. Post-translationally, N-glycosylated. The six cysteines of the extracellular domain are all involved in intramolecular disulfide bonds.

Its subcellular location is the cell membrane. It is found in the membrane. It localises to the caveola. In terms of biological role, receptor for different ligands such as phospholipids, cholesterol ester, lipoproteins, phosphatidylserine and apoptotic cells. Receptor for HDL, mediating selective uptake of cholesteryl ether and HDL-dependent cholesterol efflux. Also facilitates the flux of free and esterified cholesterol between the cell surface and apoB-containing lipoproteins and modified lipoproteins, although less efficiently than HDL. May be involved in the phagocytosis of apoptotic cells, via its phosphatidylserine binding activity. In Bos taurus (Bovine), this protein is Scavenger receptor class B member 1 (SCARB1).